The chain runs to 96 residues: Citrate lyase acyl carrier protein (96 aa).

Ser14 is modified (O-(phosphoribosyl dephospho-coenzyme A)serine).

Belongs to the CitD family. Oligomer with a subunit composition of (alpha,beta,gamma)6.

It localises to the cytoplasm. In terms of biological role, covalent carrier of the coenzyme of citrate lyase. This is Citrate lyase acyl carrier protein from Lactococcus lactis subsp. lactis (strain IL1403) (Streptococcus lactis).